A 389-amino-acid chain; its full sequence is Alkanesulfonate monooxygenase (389 aa).

This sequence belongs to the SsuD family.

It carries out the reaction an alkanesulfonate + FMNH2 + O2 = an aldehyde + FMN + sulfite + H2O + 2 H(+). In terms of biological role, catalyzes the desulfonation of aliphatic sulfonates. This chain is Alkanesulfonate monooxygenase, found in Variovorax paradoxus (strain S110).